Reading from the N-terminus, the 224-residue chain is Deoxyribose-phosphate aldolase (224 aa).

The active-site Proton donor/acceptor is aspartate 94. Lysine 156 functions as the Schiff-base intermediate with acetaldehyde in the catalytic mechanism. Lysine 184 serves as the catalytic Proton donor/acceptor.

It belongs to the DeoC/FbaB aldolase family. DeoC type 1 subfamily.

Its subcellular location is the cytoplasm. The enzyme catalyses 2-deoxy-D-ribose 5-phosphate = D-glyceraldehyde 3-phosphate + acetaldehyde. The protein operates within carbohydrate degradation; 2-deoxy-D-ribose 1-phosphate degradation; D-glyceraldehyde 3-phosphate and acetaldehyde from 2-deoxy-alpha-D-ribose 1-phosphate: step 2/2. Functionally, catalyzes a reversible aldol reaction between acetaldehyde and D-glyceraldehyde 3-phosphate to generate 2-deoxy-D-ribose 5-phosphate. This Methanocella arvoryzae (strain DSM 22066 / NBRC 105507 / MRE50) protein is Deoxyribose-phosphate aldolase.